The primary structure comprises 1092 residues: Probable cellulose synthase A catalytic subunit 5 [UDP-forming] (1092 aa).

At 1-279 (MEASAGLVAG…SSSLVNPYRM (279 aa)) the chain is on the cytoplasmic side. Residues Cys-39, Cys-42, Cys-58, Cys-61, Cys-66, Cys-69, Cys-81, and Cys-84 each contribute to the Zn(2+) site. An RING-type; degenerate zinc finger spans residues 39-85 (CQICGDDVGLTPDGEPFVACNECAFPVCRDCYEYERREGTQNCPQCK). The chain crosses the membrane as a helical span at residues 280–300 (IIIIRLVVLGFFFHYRVMHPV). Residues 301 to 302 (PD) are Extracellular-facing. A helical transmembrane segment spans residues 303 to 323 (AFALWLISVICEIWFAMSWIL). Residues 324-868 (DQFPKWFPIE…CLERFSYINS (545 aa)) lie on the Cytoplasmic side of the membrane. The UDP-alpha-D-glucose site is built by Ser-362, Lys-368, Glu-369, and Asp-398. Residue Asp-398 is part of the active site. The stretch at 450 to 479 (NFVRERRAMKREYEEFKVRINALVAKAQKV) forms a coiled coil. Position 539 (Lys-539) interacts with UDP-alpha-D-glucose. Mn(2+)-binding residues include Lys-540 and Asp-564. The active site involves Asp-792. A helical transmembrane segment spans residues 869 to 889 (IVYPWTSIPLLAYCTLPAICL). The Extracellular portion of the chain corresponds to 890–901 (LTGKFITPELTN). A helical transmembrane segment spans residues 902-922 (IASLWFMSLFICIFATGILEM). The Cytoplasmic segment spans residues 923–938 (RWSGVGIDDWWRNEQF). Residues 939–959 (WVIGGVSSHLFAVFQGLLKVI) traverse the membrane as a helical segment. At 960–987 (AGIDTSFTVTSKGGDDEEFSELYTFKWT) the chain is on the extracellular side. Residues 988 to 1008 (TLLIPPTTLLLLNFIGVVAGV) form a helical membrane-spanning segment. At 1009-1019 (SNAINNGYESW) the chain is on the cytoplasmic side. Residues 1020–1040 (GPLFGKLFFAFWVIVHLYPFL) traverse the membrane as a helical segment. Residues 1041-1049 (KGLVGRQNR) lie on the Extracellular side of the membrane. A helical transmembrane segment spans residues 1050 to 1070 (TPTIVIVWSILLASIFSLLWV). Topologically, residues 1071–1092 (RIDPFLAKNDGPLLEECGLDCN) are cytoplasmic.

This sequence belongs to the glycosyltransferase 2 family. Plant cellulose synthase subfamily. Mn(2+) serves as cofactor. Zn(2+) is required as a cofactor.

The protein resides in the cell membrane. It catalyses the reaction [(1-&gt;4)-beta-D-glucosyl](n) + UDP-alpha-D-glucose = [(1-&gt;4)-beta-D-glucosyl](n+1) + UDP + H(+). It functions in the pathway glycan metabolism; plant cellulose biosynthesis. Functionally, probable catalytic subunit of cellulose synthase terminal complexes ('rosettes'), required for beta-1,4-glucan microfibril crystallization, a major mechanism of the cell wall formation. This Oryza sativa subsp. indica (Rice) protein is Probable cellulose synthase A catalytic subunit 5 [UDP-forming] (CESA5).